We begin with the raw amino-acid sequence, 55 residues long: Ovomucoid (55 aa).

In terms of domain architecture, Kazal-like spans valine 5–cysteine 55. 3 disulfide bridges follow: cysteine 7/cysteine 37, cysteine 15/cysteine 34, and cysteine 23/cysteine 55. N-linked (GlcNAc...) asparagine glycosylation occurs at asparagine 44.

It is found in the secreted. In Dacelo novaeguineae (Laughing kookaburra), this protein is Ovomucoid.